Here is a 955-residue protein sequence, read N- to C-terminus: Thyroid hormone receptor-associated protein 3 (955 aa).

The interval 1-94 (MSKTNKSKSG…YFRGRNRGFY (94 aa)) is disordered. Position 2 is an N-acetylserine (serine 2). Positions 2–190 (SKTNKSKSGS…KSSSKDSRPS (189 aa)) are required for mRNA splicing activation. Over residues 14–51 (SRSRSASRSRSRSFSKSRSRSRSLSRSRKRRLSSRSRS) the composition is skewed to basic residues. Arginine 17 carries the dimethylated arginine modification. A compositionally biased stretch (basic and acidic residues) spans 58–75 (HNRERNHPRVYQNRDFRG). Arginine 66 carries the post-translational modification Asymmetric dimethylarginine. Residues 82-94 (RPYYFRGRNRGFY) show a composition bias toward low complexity. Asymmetric dimethylarginine is present on residues arginine 101 and arginine 108. Residues 117–559 (AYSPRRGRSR…AKGDFPTGKS (443 aa)) are disordered. Over residues 121-143 (RRGRSRSRSPKRRSPSPRSRSHS) the composition is skewed to basic residues. Residues 144-155 (RNSDKSSSDRSR) show a composition bias toward basic and acidic residues. The span at 157–166 (SSSSRSSSNH) shows a compositional bias: low complexity. Positions 167–188 (SRVESSKRKSAKEKKSSSKDSR) are enriched in basic and acidic residues. A Glycyl lysine isopeptide (Lys-Gly) (interchain with G-Cter in SUMO1); alternate cross-link involves residue lysine 202. Lysine 202 participates in a covalent cross-link: Glycyl lysine isopeptide (Lys-Gly) (interchain with G-Cter in SUMO2); alternate. The span at 204–220 (QTFSGGTSQDTKASESS) shows a compositional bias: polar residues. Lysine 215 participates in a covalent cross-link: Glycyl lysine isopeptide (Lys-Gly) (interchain with G-Cter in SUMO2). Serine 220 is modified (phosphoserine). Lysine 221 is covalently cross-linked (Glycyl lysine isopeptide (Lys-Gly) (interchain with G-Cter in SUMO2); alternate). Lysine 221 is modified (N6-acetyllysine; alternate). Serine 232, serine 237, serine 240, serine 243, and serine 248 each carry phosphoserine. Residue lysine 252 forms a Glycyl lysine isopeptide (Lys-Gly) (interchain with G-Cter in SUMO2); alternate linkage. Lysine 252 carries the post-translational modification N6-methyllysine; alternate. 2 positions are modified to phosphoserine: serine 253 and serine 257. The segment covering 266–276 (RPSPVPKPSPP) has biased composition (pro residues). Residues 282–300 (QMGSTLPSGAGYQSGTHQG) show a composition bias toward polar residues. Over residues 305 to 331 (GSGSLSPSKKSPVGKSPPSTGSTYGSS) the composition is skewed to low complexity. Serine 315, serine 320, and serine 323 each carry phosphoserine. Phosphothreonine is present on threonine 324. Serine 326 is modified (phosphoserine). The residue at position 328 (tyrosine 328) is a Phosphotyrosine. Lysine 333 is covalently cross-linked (Glycyl lysine isopeptide (Lys-Gly) (interchain with G-Cter in SUMO2)). At serine 339 the chain carries Phosphoserine. Residue lysine 346 forms a Glycyl lysine isopeptide (Lys-Gly) (interchain with G-Cter in SUMO2); alternate linkage. Lysine 346 bears the N6-acetyllysine; alternate mark. Positions 347-377 (RYLEEQKTENGKDKEQKQTNTDKEKIKEKGS) are enriched in basic and acidic residues. Glycyl lysine isopeptide (Lys-Gly) (interchain with G-Cter in SUMO2) cross-links involve residues lysine 353 and lysine 375. The required for mRNA decay activity stretch occupies residues 359-955 (DKEQKQTNTD…EKDNIQPTTE (597 aa)). Residues serine 377 and serine 379 each carry the phosphoserine modification. Lysine 387 is covalently cross-linked (Glycyl lysine isopeptide (Lys-Gly) (interchain with G-Cter in SUMO1); alternate). Residue lysine 387 forms a Glycyl lysine isopeptide (Lys-Gly) (interchain with G-Cter in SUMO2); alternate linkage. Residues lysine 389 and lysine 396 each participate in a glycyl lysine isopeptide (Lys-Gly) (interchain with G-Cter in SUMO2) cross-link. At threonine 397 the chain carries Phosphothreonine. Lysine 401 is covalently cross-linked (Glycyl lysine isopeptide (Lys-Gly) (interchain with G-Cter in SUMO2)). Phosphoserine is present on residues serine 406 and serine 408. A compositionally biased stretch (basic and acidic residues) spans 414-452 (LRDDFEKKMADFHKEEMDDQDKDKAKGRKESEFDDEPKF). Residues lysine 421 and lysine 427 each participate in a glycyl lysine isopeptide (Lys-Gly) (interchain with G-Cter in SUMO2) cross-link. Serine 444 bears the Phosphoserine mark. A Glycyl lysine isopeptide (Lys-Gly) (interchain with G-Cter in SUMO1); alternate cross-link involves residue lysine 451. Glycyl lysine isopeptide (Lys-Gly) (interchain with G-Cter in SUMO2); alternate cross-links involve residues lysine 451 and lysine 455. An N6-acetyllysine; alternate modification is found at lysine 455. Glycyl lysine isopeptide (Lys-Gly) (interchain with G-Cter in SUMO2) cross-links involve residues lysine 461 and lysine 467. Serine 468 bears the Phosphoserine mark. Glycyl lysine isopeptide (Lys-Gly) (interchain with G-Cter in SUMO2); alternate cross-links involve residues lysine 470 and lysine 481. N6-acetyllysine; alternate occurs at positions 470 and 481. Residue lysine 486 forms a Glycyl lysine isopeptide (Lys-Gly) (interchain with G-Cter in SUMO2) linkage. A compositionally biased stretch (basic and acidic residues) spans 495 to 521 (FPERSKKEDRGKRSEGGHRGFVPEKNF). The residue at position 519 (lysine 519) is an N6-acetyllysine. Lysine 527 participates in a covalent cross-link: Glycyl lysine isopeptide (Lys-Gly) (interchain with G-Cter in SUMO2); alternate. Lysine 527 bears the N6-acetyllysine; alternate mark. The residue at position 535 (serine 535) is a Phosphoserine. A compositionally biased stretch (basic and acidic residues) spans 540–550 (KTSESRDKLGA). A Glycyl lysine isopeptide (Lys-Gly) (interchain with G-Cter in SUMO2) cross-link involves residue lysine 551. 552 to 559 (GDFPTGKS) contributes to the ATP binding site. A Glycyl lysine isopeptide (Lys-Gly) (interchain with G-Cter in SUMO2); alternate cross-link involves residue lysine 558. Lysine 558 is modified (N6-acetyllysine; alternate). 3 positions are modified to phosphoserine: serine 560, serine 562, and serine 575. A Glycyl lysine isopeptide (Lys-Gly) (interchain with G-Cter in SUMO2) cross-link involves residue lysine 602. Phosphoserine occurs at positions 619, 622, 672, 682, and 684. Over residues 663-680 (EQEAAKNKKSPEIHRRID) the composition is skewed to basic and acidic residues. The tract at residues 663 to 955 (EQEAAKNKKS…EKDNIQPTTE (293 aa)) is disordered. The segment covering 691-761 (LAHDEMKSPR…RSAEKTEKTH (71 aa)) has biased composition (basic and acidic residues). Lysine 697 is covalently cross-linked (Glycyl lysine isopeptide (Lys-Gly) (interchain with G-Cter in SUMO2)). The residue at position 698 (serine 698) is a Phosphoserine. Glycyl lysine isopeptide (Lys-Gly) (interchain with G-Cter in SUMO2) cross-links involve residues lysine 705, lysine 709, lysine 711, lysine 756, and lysine 759. Basic residues predominate over residues 762–775 (KGSKKQKKHRRARD). Over residues 779 to 789 (SSSSSSQSSHS) the composition is skewed to low complexity. At lysine 811 the chain carries N6-acetyllysine. Arginine 845 is subject to Asymmetric dimethylarginine. The segment covering 848 to 859 (YSGNNNNNSNND) has biased composition (low complexity). Threonine 874 carries the post-translational modification Phosphothreonine. Glycyl lysine isopeptide (Lys-Gly) (interchain with G-Cter in SUMO2) cross-links involve residues lysine 876 and lysine 879. A compositionally biased stretch (basic and acidic residues) spans 881 to 895 (YLHDDREGEGSDKWV). Phosphoserine is present on residues serine 928 and serine 939. The segment covering 930-940 (EEGEIEDDESG) has biased composition (acidic residues).

It belongs to the BCLAF1/THRAP3 family. Associated with the large multiprotein complex TRAP (Mediator complex-like). Interacts with SFPQ; the interaction is dependent on SFPQ phosphorylation at 'Thr-687' and inhibits binding of SFPQ to an ESS1 exonic splicing silencer element-containing RNA. Interacts with NXF1. Component of the SNARP complex which consists at least of SNIP1, SNW1, THRAP3, BCLAF1 and PNN. Associated with spliced mRNP complexes. Interacts with HELZ2 and PPARG. Interacts with CLOCK and BMAL1. Component of a MACOM-like complex, named WTAP complex, composed of WTAP, ZC3H13, CBLL1, KIAA1429, RBM15, BCLAF1 and THRAP3. In terms of processing, ADP-ribosylation during genotoxic stress promotes accumulation in nuclear speckles. As to expression, ubiquitous.

The protein resides in the nucleus. Its subcellular location is the nucleoplasm. The protein localises to the nucleus speckle. Involved in pre-mRNA splicing. Remains associated with spliced mRNA after splicing which probably involves interactions with the exon junction complex (EJC). Can trigger mRNA decay which seems to be independent of nonsense-mediated decay involving premature stop codons (PTC) recognition. May be involved in nuclear mRNA decay. Involved in regulation of signal-induced alternative splicing. During splicing of PTPRC/CD45 is proposed to sequester phosphorylated SFPQ from PTPRC/CD45 pre-mRNA in resting T-cells. Involved in cyclin-D1/CCND1 mRNA stability probably by acting as component of the SNARP complex which associates with both the 3'end of the CCND1 gene and its mRNA. Involved in response to DNA damage. Is excluced from DNA damage sites in a manner that parallels transcription inhibition; the function may involve the SNARP complex. Initially thought to play a role in transcriptional coactivation through its association with the TRAP complex; however, it is not regarded as a stable Mediator complex subunit. Cooperatively with HELZ2, enhances the transcriptional activation mediated by PPARG, maybe through the stabilization of the PPARG binding to DNA in presence of ligand. May play a role in the terminal stage of adipocyte differentiation. Plays a role in the positive regulation of the circadian clock. Acts as a coactivator of the CLOCK-BMAL1 heterodimer and promotes its transcriptional activator activity and binding to circadian target genes. The sequence is that of Thyroid hormone receptor-associated protein 3 from Homo sapiens (Human).